The following is a 1471-amino-acid chain: Myosin-51 (1471 aa).

The Myosin N-terminal SH3-like domain occupies 7–61 (SVGSECWVSNNNGHWDAARLIEIKDNGGGKVVATVAKSSGVLETVNYQQLQNRNI). The region spanning 65-749 (ESPSDLTNLP…VIGNFEEAHR (685 aa)) is the Myosin motor domain. 159 to 166 (GESGAGKT) contributes to the ATP binding site. Residues 628 to 650 (LSQLMTTVSSTNVHYIRCIKPNE) are actin-binding. 6 consecutive IQ domains span residues 753-773 (SKST…KEYQ), 776-796 (VKFI…QRFE), 801-821 (ERAA…KRYL), 824-844 (IKCA…SRYI), 849-869 (ESSA…KTFR), and 872-892 (KKSV…RYLR). A coiled-coil region spans residues 909-952 (KNLQASITEVSKQLKSNSKKVTVLRNKLNILNNSLSKWKCLIKK). The region spanning 1171 to 1417 (EKPLQAVLYW…SKAVEALSCK (247 aa)) is the Dilute domain.

This sequence belongs to the TRAFAC class myosin-kinesin ATPase superfamily. Myosin family.

The protein localises to the cytoplasm. Its function is as follows. Involved in cytokinesis. In Schizosaccharomyces pombe (strain 972 / ATCC 24843) (Fission yeast), this protein is Myosin-51 (myo51).